Here is a 124-residue protein sequence, read N- to C-terminus: Histone H2A (124 aa).

Over residues 1-18 the composition is skewed to basic residues; it reads MSGRGKGGKAKGKSKSRS. A disordered region spans residues 1–23; it reads MSGRGKGGKAKGKSKSRSSRAGL. Ser-2 carries the post-translational modification N-acetylserine. Ser-2 is modified (phosphoserine). An N5-methylglutamine modification is found at Gln-104.

This sequence belongs to the histone H2A family. The nucleosome is a histone octamer containing two molecules each of H2A, H2B, H3 and H4 assembled in one H3-H4 heterotetramer and two H2A-H2B heterodimers. The octamer wraps approximately 147 bp of DNA. The N-terminal serine is acetylated. That serine is also phosphorylated in approximately 60% of the molecules isolated from erythrocytes.

It is found in the nucleus. The protein resides in the chromosome. Core component of nucleosome. Nucleosomes wrap and compact DNA into chromatin, limiting DNA accessibility to the cellular machineries which require DNA as a template. Histones thereby play a central role in transcription regulation, DNA repair, DNA replication and chromosomal stability. DNA accessibility is regulated via a complex set of post-translational modifications of histones, also called histone code, and nucleosome remodeling. The sequence is that of Histone H2A from Sipunculus nudus (Sipunculan worm).